We begin with the raw amino-acid sequence, 121 residues long: Large ribosomal subunit protein mL52 (121 aa).

The transit peptide at 1–22 (MAALGTWLSSVRRLHCSVVARA) directs the protein to the mitochondrion. The span at 98-109 (QEERKKEHDLKP) shows a compositional bias: basic and acidic residues. Residues 98-121 (QEERKKEHDLKPKGTLLRSPLPNQ) form a disordered region.

It belongs to the mitochondrion-specific ribosomal protein mL52 family. In terms of assembly, component of the mitochondrial ribosome large subunit (39S) which comprises a 16S rRNA and about 50 distinct proteins.

The protein localises to the mitochondrion. In Mus musculus (Mouse), this protein is Large ribosomal subunit protein mL52 (Mrpl52).